A 155-amino-acid chain; its full sequence is Molybdopterin synthase catalytic subunit 1 (155 aa).

Substrate contacts are provided by residues 101–102 (HR), lysine 117, and 124–126 (KKE).

Belongs to the MoaE family. MOCS2B subfamily. In terms of assembly, heterotetramer; composed of 2 small (MOCS2A) and 2 large (MOCS2B) subunits.

Its subcellular location is the cytoplasm. The catalysed reaction is 2 [molybdopterin-synthase sulfur-carrier protein]-C-terminal-Gly-aminoethanethioate + cyclic pyranopterin phosphate + H2O = molybdopterin + 2 [molybdopterin-synthase sulfur-carrier protein]-C-terminal Gly-Gly + 2 H(+). The protein operates within cofactor biosynthesis; molybdopterin biosynthesis. Its function is as follows. Catalytic subunit of the molybdopterin synthase complex, a complex that catalyzes the conversion of precursor Z into molybdopterin. Acts by mediating the incorporation of 2 sulfur atoms from thiocarboxylated MOCS2A into precursor Z to generate a dithiolene group. The protein is Molybdopterin synthase catalytic subunit 1 of Aedes aegypti (Yellowfever mosquito).